We begin with the raw amino-acid sequence, 169 residues long: Transmembrane protein B169L (169 aa).

Helical transmembrane passes span 28-48 (NPFIVALIITAVVLVVFFAIC) and 60-80 (TAIYVYICIVALLFLHYYVLN). Asparagine 88 carries an N-linked (GlcNAc...) asparagine; by host glycan. The segment at 107–169 (DEIIPPISPP…EVIMPSQYNN (63 aa)) is disordered. The span at 140-154 (KPADSKPASSADSKP) shows a compositional bias: low complexity.

It belongs to the asfivirus B169L family.

The protein resides in the host membrane. It localises to the virion. This is Transmembrane protein B169L from Ornithodoros (relapsing fever ticks).